The primary structure comprises 222 residues: MQLVTAAEMQQIDSYTIETIGMPQNVLIERAAMSVIDVIGAGHFNLDHILVLAGLGNNGADGIAIARLLYTQGFNVSLQFVGNVSRAKASVQQQLQIIENYGLIRAEKSDFNEATLIVDAIFGVGLNNTLPEGLQKMIKAANHIEKTVIAVDIPTGIDATTGEVRGAALKAHTTVTFGYNKVGLTQNVGGYLSGNVIVKDIGLRLPEDFTFTTVTPDNIATT.

The YjeF N-terminal domain maps to 9 to 209; the sequence is MQQIDSYTIE…DIGLRLPEDF (201 aa). 57-61 contacts (6S)-NADPHX; sequence NNGAD. K(+)-binding residues include Asn-58 and Asp-119. Residues 123–129 and Asp-152 each bind (6S)-NADPHX; that span reads GVGLNNT. A K(+)-binding site is contributed by Thr-155.

This sequence belongs to the NnrE/AIBP family. Requires K(+) as cofactor.

The catalysed reaction is (6R)-NADHX = (6S)-NADHX. It carries out the reaction (6R)-NADPHX = (6S)-NADPHX. Catalyzes the epimerization of the S- and R-forms of NAD(P)HX, a damaged form of NAD(P)H that is a result of enzymatic or heat-dependent hydration. This is a prerequisite for the S-specific NAD(P)H-hydrate dehydratase to allow the repair of both epimers of NAD(P)HX. The chain is NAD(P)H-hydrate epimerase from Leuconostoc citreum (strain KM20).